The chain runs to 439 residues: Tol-Pal system protein TolB (439 aa).

A signal peptide spans 1-22 (MTKFPRWLAMLVGLLFPLSALT).

It belongs to the TolB family. In terms of assembly, the Tol-Pal system is composed of five core proteins: the inner membrane proteins TolA, TolQ and TolR, the periplasmic protein TolB and the outer membrane protein Pal. They form a network linking the inner and outer membranes and the peptidoglycan layer.

It is found in the periplasm. Its function is as follows. Part of the Tol-Pal system, which plays a role in outer membrane invagination during cell division and is important for maintaining outer membrane integrity. The sequence is that of Tol-Pal system protein TolB from Xylella fastidiosa (strain 9a5c).